The primary structure comprises 1305 residues: Myosin-IIIb (1305 aa).

A Protein kinase domain is found at 15–281; it reads WEIIETIGKG…VTHLLDHPFI (267 aa). ATP-binding positions include 21-29 and K44; that span reads IGKGTYGKV. The Proton acceptor role is filled by D144. Residues 331–1046 enclose the Myosin motor domain; the sequence is CLEDDLVNLE…HVEQLNLLLR (716 aa). The tract at residues 927–949 is actin-binding; sequence LMDLLSKMVVGQPHFIRCIKPND. IQ domains follow at residues 1048 to 1077 and 1075 to 1104; these read VMGR…KREK and REKG…RRSE. Disordered regions lie at residues 1093 to 1164 and 1200 to 1233; these read RKLK…VTSG and SPCE…MLSS.

It in the C-terminal section; belongs to the TRAFAC class myosin-kinesin ATPase superfamily. Myosin family. This sequence in the N-terminal section; belongs to the protein kinase superfamily. STE Ser/Thr protein kinase family. Interacts (via C-terminus) with ESPN. Interacts (via C-terminus) with ESPNL. In terms of tissue distribution, expressed in the cochlear hair cells (at protein level). Expressed in utricle hair bundles (at protein level).

The protein resides in the cytoplasm. It is found in the cytoskeleton. The protein localises to the cell projection. It localises to the stereocilium. The enzyme catalyses L-seryl-[protein] + ATP = O-phospho-L-seryl-[protein] + ADP + H(+). The catalysed reaction is L-threonyl-[protein] + ATP = O-phospho-L-threonyl-[protein] + ADP + H(+). Functionally, probable actin-based motor with a protein kinase activity. Required for normal cochlear hair bundle development and hearing. Plays an important role in the early steps of cochlear hair bundle morphogenesis. Influences the number and lengths of stereocilia to be produced and limits the growth of microvilli within the forming auditory hair bundles thereby contributing to the architecture of the hair bundle, including its staircase pattern. Involved in the elongation of actin in stereocilia tips by transporting the actin regulatory factor ESPN to the plus ends of actin filaments. The chain is Myosin-IIIb (Myo3b) from Mus musculus (Mouse).